A 155-amino-acid polypeptide reads, in one-letter code: Ubiquitin-conjugating enzyme E2 14 (155 aa).

The UBC core domain occupies 7–154; that stretch reads SSSRRLTKEY…ARDYVEQFAK (148 aa). C91 (glycyl thioester intermediate) is an active-site residue.

This sequence belongs to the ubiquitin-conjugating enzyme family.

It catalyses the reaction S-ubiquitinyl-[E1 ubiquitin-activating enzyme]-L-cysteine + [E2 ubiquitin-conjugating enzyme]-L-cysteine = [E1 ubiquitin-activating enzyme]-L-cysteine + S-ubiquitinyl-[E2 ubiquitin-conjugating enzyme]-L-cysteine.. It participates in protein modification; protein ubiquitination. Functionally, catalyzes the covalent attachment of ubiquitin to other proteins. Mediates the selective degradation of short-lived and abnormal proteins. The polypeptide is Ubiquitin-conjugating enzyme E2 14 (ubc14) (Schizosaccharomyces pombe (strain 972 / ATCC 24843) (Fission yeast)).